Reading from the N-terminus, the 232-residue chain is Ribonuclease 3 (232 aa).

The 128-residue stretch at 6–133 (FNDIENRLGV…VIAAVYLDKG (128 aa)) folds into the RNase III domain. E46 is a Mg(2+) binding site. D50 is a catalytic residue. Positions 119 and 122 each coordinate Mg(2+). E122 is an active-site residue. Residues 160-229 (DFKTKLQELL…AKEALKRLEK (70 aa)) enclose the DRBM domain.

This sequence belongs to the ribonuclease III family. As to quaternary structure, homodimer. Mg(2+) is required as a cofactor.

It is found in the cytoplasm. The enzyme catalyses Endonucleolytic cleavage to 5'-phosphomonoester.. Functionally, digests double-stranded RNA. Involved in the processing of primary rRNA transcript to yield the immediate precursors to the large and small rRNAs (23S and 16S). Processes some mRNAs, and tRNAs when they are encoded in the rRNA operon. Processes pre-crRNA and tracrRNA of type II CRISPR loci if present in the organism. The polypeptide is Ribonuclease 3 (Clostridium botulinum (strain Alaska E43 / Type E3)).